Consider the following 1067-residue polypeptide: Carbamoyl phosphate synthase large chain (1067 aa).

The tract at residues M1–E401 is carboxyphosphate synthetic domain. Residues R129, R169, G175, G176, K208, V210, E215, G241, I242, H243, Q284, and E298 each contribute to the ATP site. The 195-residue stretch at R133–L327 folds into the ATP-grasp 1 domain. 3 residues coordinate Mg(2+): Q284, E298, and N300. The Mn(2+) site is built by Q284, E298, and N300. The tract at residues I402–V549 is oligomerization domain. The segment at V550 to S932 is carbamoyl phosphate synthetic domain. In terms of domain architecture, ATP-grasp 2 spans D674–L864. ATP is bound by residues R710, K749, L751, E755, G780, V781, H782, S783, Q823, and E835. Mg(2+) contacts are provided by Q823, E835, and N837. 3 residues coordinate Mn(2+): Q823, E835, and N837. Residues M933–I1067 enclose the MGS-like domain. The segment at M933–I1067 is allosteric domain.

It belongs to the CarB family. In terms of assembly, composed of two chains; the small (or glutamine) chain promotes the hydrolysis of glutamine to ammonia, which is used by the large (or ammonia) chain to synthesize carbamoyl phosphate. Tetramer of heterodimers (alpha,beta)4. Mg(2+) serves as cofactor. Requires Mn(2+) as cofactor.

It catalyses the reaction hydrogencarbonate + L-glutamine + 2 ATP + H2O = carbamoyl phosphate + L-glutamate + 2 ADP + phosphate + 2 H(+). It carries out the reaction hydrogencarbonate + NH4(+) + 2 ATP = carbamoyl phosphate + 2 ADP + phosphate + 2 H(+). It participates in amino-acid biosynthesis; L-arginine biosynthesis; carbamoyl phosphate from bicarbonate: step 1/1. Its pathway is pyrimidine metabolism; UMP biosynthesis via de novo pathway; (S)-dihydroorotate from bicarbonate: step 1/3. Its function is as follows. Large subunit of the glutamine-dependent carbamoyl phosphate synthetase (CPSase). CPSase catalyzes the formation of carbamoyl phosphate from the ammonia moiety of glutamine, carbonate, and phosphate donated by ATP, constituting the first step of 2 biosynthetic pathways, one leading to arginine and/or urea and the other to pyrimidine nucleotides. The large subunit (synthetase) binds the substrates ammonia (free or transferred from glutamine from the small subunit), hydrogencarbonate and ATP and carries out an ATP-coupled ligase reaction, activating hydrogencarbonate by forming carboxy phosphate which reacts with ammonia to form carbamoyl phosphate. The sequence is that of Carbamoyl phosphate synthase large chain from Clostridium perfringens (strain 13 / Type A).